A 217-amino-acid polypeptide reads, in one-letter code: GTP cyclohydrolase 1 (217 aa).

Cys-109, His-112, and Cys-180 together coordinate Zn(2+).

It belongs to the GTP cyclohydrolase I family. Toroid-shaped homodecamer, composed of two pentamers of five dimers.

The enzyme catalyses GTP + H2O = 7,8-dihydroneopterin 3'-triphosphate + formate + H(+). Its pathway is cofactor biosynthesis; 7,8-dihydroneopterin triphosphate biosynthesis; 7,8-dihydroneopterin triphosphate from GTP: step 1/1. In Vibrio cholerae serotype O1 (strain ATCC 39315 / El Tor Inaba N16961), this protein is GTP cyclohydrolase 1.